Here is a 297-residue protein sequence, read N- to C-terminus: Phosphatidylserine decarboxylase proenzyme (297 aa).

Active-site charge relay system; for autoendoproteolytic cleavage activity residues include D100, H157, and S263. The active-site Schiff-base intermediate with substrate; via pyruvic acid; for decarboxylase activity is the S263. Position 263 is a pyruvic acid (Ser); by autocatalysis (S263).

The protein belongs to the phosphatidylserine decarboxylase family. PSD-B subfamily. Prokaryotic type I sub-subfamily. Heterodimer of a large membrane-associated beta subunit and a small pyruvoyl-containing alpha subunit. The cofactor is pyruvate. Post-translationally, is synthesized initially as an inactive proenzyme. Formation of the active enzyme involves a self-maturation process in which the active site pyruvoyl group is generated from an internal serine residue via an autocatalytic post-translational modification. Two non-identical subunits are generated from the proenzyme in this reaction, and the pyruvate is formed at the N-terminus of the alpha chain, which is derived from the carboxyl end of the proenzyme. The autoendoproteolytic cleavage occurs by a canonical serine protease mechanism, in which the side chain hydroxyl group of the serine supplies its oxygen atom to form the C-terminus of the beta chain, while the remainder of the serine residue undergoes an oxidative deamination to produce ammonia and the pyruvoyl prosthetic group on the alpha chain. During this reaction, the Ser that is part of the protease active site of the proenzyme becomes the pyruvoyl prosthetic group, which constitutes an essential element of the active site of the mature decarboxylase.

The protein resides in the cell membrane. The catalysed reaction is a 1,2-diacyl-sn-glycero-3-phospho-L-serine + H(+) = a 1,2-diacyl-sn-glycero-3-phosphoethanolamine + CO2. It participates in phospholipid metabolism; phosphatidylethanolamine biosynthesis; phosphatidylethanolamine from CDP-diacylglycerol: step 2/2. Functionally, catalyzes the formation of phosphatidylethanolamine (PtdEtn) from phosphatidylserine (PtdSer). In Actinobacillus pleuropneumoniae serotype 5b (strain L20), this protein is Phosphatidylserine decarboxylase proenzyme.